Consider the following 312-residue polypeptide: Uracil-DNA glycosylase (312 aa).

Residues 1 to 11 (MSSACDHETEA) show a composition bias toward basic and acidic residues. Positions 1 to 61 (MSSACDHETE…PPKRRRPCGL (61 aa)) are disordered. Positions 22–33 (EENGSNSSTPTS) are enriched in polar residues. Asp-155 serves as the catalytic Proton acceptor.

The protein belongs to the uracil-DNA glycosylase (UDG) superfamily. UNG family.

Its subcellular location is the host nucleus. The catalysed reaction is Hydrolyzes single-stranded DNA or mismatched double-stranded DNA and polynucleotides, releasing free uracil.. Its function is as follows. Excises uracil residues from the DNA which can arise as a result of misincorporation of dUMP residues by DNA polymerase or deamination of cytosines. Therefore may reduce deleterious uracil incorporation into the viral genome, particularly in terminally differentiated cells which lack DNA repair enzymes. The polypeptide is Uracil-DNA glycosylase (61) (Equine herpesvirus 1 (strain V592) (EHV-1)).